The chain runs to 306 residues: MRNLRLGTRGSQLALWQARHVASLLESSIPDLKVEIKTIKTTGDKILDVALSKIGDKGLFTKEIEKELLDGEIDIAVHSMKDLPSELPPGLCIAAVLEREDPRDVLLSHKNYSLADLPQAALIGTSSLRRIAQLKAWRPDLQLVDMRGNVETRIRKMKEQDLDGIILACAGVKRLGLEEMISDYLPAHLVLPAVGQGMIAVEARSDEQDVLKLLSRINHQDSFLAGQAERGFLHELGGGCQVPVASLAELQGGQLHIRGLIASLDGKEKYSGSSDCSPPEAEEAGRELARSLLQQGGAAILCETRK.

C240 is modified (S-(dipyrrolylmethanemethyl)cysteine).

It belongs to the HMBS family. Monomer. Dipyrromethane is required as a cofactor.

It carries out the reaction 4 porphobilinogen + H2O = hydroxymethylbilane + 4 NH4(+). The protein operates within porphyrin-containing compound metabolism; protoporphyrin-IX biosynthesis; coproporphyrinogen-III from 5-aminolevulinate: step 2/4. Its function is as follows. Tetrapolymerization of the monopyrrole PBG into the hydroxymethylbilane pre-uroporphyrinogen in several discrete steps. The chain is Porphobilinogen deaminase from Syntrophomonas wolfei subsp. wolfei (strain DSM 2245B / Goettingen).